We begin with the raw amino-acid sequence, 103 residues long: Sperm-associated antigen 11B (103 aa).

The signal sequence occupies residues 1-25; sequence MRQRLLPSVTSLLLVALLFPGSSQA. Asparagine 29 carries an N-linked (GlcNAc...) asparagine glycan.

It belongs to the SPAG11 family. As to expression, specifically expressed in caput and proximal corpus of epididymis (at protein level). Present in the epididymal epithelium and on the sperm surface, with a subacrosomal equatorial distribution on the sperm head (at protein level).

The protein resides in the secreted. Has antimicrobial activity against E.coli. Plays a role in the defense response in the male reproductive tract, contributing to sperm maturation, storage and protection. The chain is Sperm-associated antigen 11B from Homo sapiens (Human).